We begin with the raw amino-acid sequence, 602 residues long: Elongation factor 4 (602 aa).

Residues 7–189 (KYIRNFSIVA…AIVNKVPAPE (183 aa)) enclose the tr-type G domain. GTP contacts are provided by residues 19–24 (DHGKST) and 136–139 (NKID).

The protein belongs to the TRAFAC class translation factor GTPase superfamily. Classic translation factor GTPase family. LepA subfamily.

It is found in the cell membrane. It catalyses the reaction GTP + H2O = GDP + phosphate + H(+). Required for accurate and efficient protein synthesis under certain stress conditions. May act as a fidelity factor of the translation reaction, by catalyzing a one-codon backward translocation of tRNAs on improperly translocated ribosomes. Back-translocation proceeds from a post-translocation (POST) complex to a pre-translocation (PRE) complex, thus giving elongation factor G a second chance to translocate the tRNAs correctly. Binds to ribosomes in a GTP-dependent manner. The polypeptide is Elongation factor 4 (Clostridium botulinum (strain Okra / Type B1)).